Here is a 419-residue protein sequence, read N- to C-terminus: uncharacterized protein (419 aa).

The protein belongs to the MT-A70-like family.

The protein localises to the cytoplasm. This is an uncharacterized protein from Schizosaccharomyces pombe (strain 972 / ATCC 24843) (Fission yeast).